The chain runs to 567 residues: Serine/threonine-protein kinase SSN3 (567 aa).

Positions 68–470 constitute a Protein kinase domain; it reads YEIIGYIAAG…AINALDHSYF (403 aa). Residue 74–82 participates in ATP binding; that stretch reads IAAGTYGKV. Residues 88 to 179 are disordered; the sequence is RQSSKSSSST…RNSENTDNRR (92 aa). Residues 90-101 show a composition bias toward low complexity; it reads SSKSSSSTGSDS. Polar residues-rich tracts occupy residues 102 to 122 and 133 to 150; these read LAQD…QNAG and PNSN…ELST. Over residues 167–179 the composition is skewed to basic and acidic residues; that stretch reads GDKRNSENTDNRR. K190 contacts ATP. The Proton acceptor role is filled by D293. The segment covering 546 to 556 has biased composition (low complexity); sequence AVSGNSSSQSS. A disordered region spans residues 546–567; it reads AVSGNSSSQSSRNMEPMKKKRK.

It belongs to the protein kinase superfamily. CMGC Ser/Thr protein kinase family. CDC2/CDKX subfamily. In terms of assembly, component of the SRB8-11 complex, a regulatory module of the Mediator complex. Mg(2+) serves as cofactor.

It localises to the nucleus. It catalyses the reaction L-seryl-[protein] + ATP = O-phospho-L-seryl-[protein] + ADP + H(+). The enzyme catalyses L-threonyl-[protein] + ATP = O-phospho-L-threonyl-[protein] + ADP + H(+). It carries out the reaction [DNA-directed RNA polymerase] + ATP = phospho-[DNA-directed RNA polymerase] + ADP + H(+). Functionally, component of the SRB8-11 complex. The SRB8-11 complex is a regulatory module of the Mediator complex which is itself involved in regulation of basal and activated RNA polymerase II-dependent transcription. The SRB8-11 complex may be involved in the transcriptional repression of a subset of genes regulated by Mediator. It may inhibit the association of the Mediator complex with RNA polymerase II to form the holoenzyme complex. The SRB8-11 complex phosphorylates the C-terminal domain (CTD) of the largest subunit of RNA polymerase II. The sequence is that of Serine/threonine-protein kinase SSN3 (SSN3) from Candida glabrata (strain ATCC 2001 / BCRC 20586 / JCM 3761 / NBRC 0622 / NRRL Y-65 / CBS 138) (Yeast).